The chain runs to 441 residues: Collagen alpha-1(XXVI) chain (441 aa).

The first 20 residues, 1–20, serve as a signal peptide directing secretion; that stretch reads MKLALLLPWACCCLCGSALA. Residues 52-128 form the EMI domain; that stretch reads RRHWCHHTVT…PGFTGSNCDE (77 aa). 3 cysteine pairs are disulfide-bonded: Cys-56–Cys-118, Cys-83–Cys-89, and Cys-117–Cys-126. Asn-70 carries N-linked (GlcNAc...) asparagine glycosylation. Asn-132 carries N-linked (GlcNAc...) asparagine glycosylation. 2 disordered regions span residues 156-362 and 390-441; these read AERP…AEGE and PLAS…SSRK. Collagen-like domains follow at residues 199–267 and 302–355; these read GPAG…PGPS and GVPG…EGEK. Pro residues-rich tracts occupy residues 200–215, 231–243, 252–269, and 306–327; these read PAGP…PAGP, AGPP…PGPR, PGPP…PSPN, and PRGP…PPGT. Basic and acidic residues predominate over residues 348–357; the sequence is VKGEEGEKAA.

In terms of assembly, homotrimer or heterotrimer. Hydroxylated on proline residues.

It is found in the secreted. Its subcellular location is the extracellular space. The protein resides in the extracellular matrix. This is Collagen alpha-1(XXVI) chain (COL26A1) from Homo sapiens (Human).